The following is an 824-amino-acid chain: Glycerol-3-phosphate acyltransferase (824 aa).

Positions 302-307 (CHRSHM) match the HXXXXD motif motif.

This sequence belongs to the GPAT/DAPAT family.

It is found in the cell inner membrane. It catalyses the reaction sn-glycerol 3-phosphate + an acyl-CoA = a 1-acyl-sn-glycero-3-phosphate + CoA. It participates in phospholipid metabolism; CDP-diacylglycerol biosynthesis; CDP-diacylglycerol from sn-glycerol 3-phosphate: step 1/3. The polypeptide is Glycerol-3-phosphate acyltransferase (Actinobacillus pleuropneumoniae serotype 7 (strain AP76)).